The sequence spans 637 residues: 1-deoxy-D-xylulose-5-phosphate synthase (637 aa).

Thiamine diphosphate is bound by residues His-76 and 117 to 119 (GHS). Mg(2+) is bound at residue Asp-148. Thiamine diphosphate contacts are provided by residues 149 to 150 (GA), Asn-177, Tyr-294, and Glu-381. A Mg(2+)-binding site is contributed by Asn-177.

It belongs to the transketolase family. DXPS subfamily. Homodimer. Mg(2+) is required as a cofactor. Thiamine diphosphate serves as cofactor.

The enzyme catalyses D-glyceraldehyde 3-phosphate + pyruvate + H(+) = 1-deoxy-D-xylulose 5-phosphate + CO2. It participates in metabolic intermediate biosynthesis; 1-deoxy-D-xylulose 5-phosphate biosynthesis; 1-deoxy-D-xylulose 5-phosphate from D-glyceraldehyde 3-phosphate and pyruvate: step 1/1. Functionally, catalyzes the acyloin condensation reaction between C atoms 2 and 3 of pyruvate and glyceraldehyde 3-phosphate to yield 1-deoxy-D-xylulose-5-phosphate (DXP). In Neisseria gonorrhoeae (strain NCCP11945), this protein is 1-deoxy-D-xylulose-5-phosphate synthase.